The sequence spans 421 residues: UDP-glucuronic acid decarboxylase 1 (421 aa).

Over 1–19 (MVRTRIQRLLTGINRRMMK) the chain is Cytoplasmic. Residues 20 to 40 (LLIALALIAYVASVWGNFVNM) form a helical membrane-spanning segment. Residues 41-421 (SKSIQENGEQ…RVKKGRTRHN (381 aa)) lie on the Lumenal side of the membrane. NAD(+) contacts are provided by Gly99, Phe100, Val101, Asp120, Asn121, Phe123, Thr124, Gly125, Asp145, and Val146. Residues Leu150 and Tyr151 each coordinate UDP-alpha-D-glucuronate. NAD(+) is bound by residues Leu160 and Ser162. A UDP-alpha-D-glucuronate-binding site is contributed by Lys178. Thr179 is an NAD(+) binding site. UDP-alpha-D-glucuronate-binding residues include Asn186, Gly189, Lys192, and Arg193. Residues Ala201, Tyr232, and Lys236 each contribute to the NAD(+) site. Tyr232 serves as the catalytic Proton acceptor. Residues Tyr246, Gln249, and Glu250 each coordinate UDP-alpha-D-glucuronate. The NAD(+) site is built by Thr262, His268, and Arg273. N-linked (GlcNAc...) asparagine glycosylation is found at Asn317 and Asn386. A disordered region spans residues 400 to 421 (ANNQYIPKPKPARVKKGRTRHN). The span at 409-421 (KPARVKKGRTRHN) shows a compositional bias: basic residues.

The protein belongs to the NAD(P)-dependent epimerase/dehydratase family. UDP-glucuronic acid decarboxylase subfamily. In terms of assembly, homodimer and homotetramer. NAD(+) is required as a cofactor.

Its subcellular location is the golgi apparatus. It localises to the golgi stack membrane. The enzyme catalyses UDP-alpha-D-glucuronate + H(+) = UDP-alpha-D-xylose + CO2. Its pathway is nucleotide-sugar biosynthesis; UDP-alpha-D-xylose biosynthesis; UDP-alpha-D-xylose from UDP-alpha-D-glucuronate: step 1/1. Functionally, catalyzes the NAD-dependent decarboxylation of UDP-glucuronic acid to UDP-xylose. Necessary for the biosynthesis of the core tetrasaccharide in glycosaminoglycan biosynthesis. This chain is UDP-glucuronic acid decarboxylase 1 (uxs1), found in Xenopus tropicalis (Western clawed frog).